The primary structure comprises 434 residues: Innexin-14 (434 aa).

A run of 4 helical transmembrane segments spans residues 30–50 (LFTV…QHFG), 106–126 (WVPF…WCWA), 301–321 (IFIG…IGTV), and 365–385 (YLCA…GFLK).

This sequence belongs to the pannexin family.

The protein localises to the cell membrane. Its subcellular location is the cell junction. The protein resides in the gap junction. Functionally, structural component of the gap junctions. This is Innexin-14 (inx-14) from Caenorhabditis elegans.